The sequence spans 489 residues: Ribulose-1,5 bisphosphate carboxylase/oxygenase large subunit N-methyltransferase, chloroplastic (489 aa).

Residues 1–37 (MATIFSGGSVSPFLFHTNKGTSFTPKAPILHLKRSFS) constitute a chloroplast transit peptide. The SET domain maps to 64–288 (EGVITAKTPV…AGEQVYIQYD (225 aa)). Residues 80–82 (EGL) and Arg-222 each bind S-adenosyl-L-methionine. Substrate-binding residues include Arg-222, Arg-226, and Asp-239. Position 242 to 243 (242 to 243 (NH)) interacts with S-adenosyl-L-methionine. Tyr-254, Tyr-287, and Tyr-300 together coordinate substrate.

Belongs to the class V-like SAM-binding methyltransferase superfamily. Plant protein-lysine LSMT methyltransferase family. In terms of assembly, homotrimer. Highly expressed in leaf.

The protein resides in the plastid. Its subcellular location is the chloroplast. It catalyses the reaction L-lysyl-[ribulose-1,5-bisphosphate carboxylase] + 3 S-adenosyl-L-methionine = N(6),N(6),N(6)-trimethyl-L-lysyl-[ribulose-1,5-bisphosphate carboxylase] + 3 S-adenosyl-L-homocysteine + 3 H(+). The enzyme catalyses [fructose-bisphosphate aldolase]-L-lysine + 3 S-adenosyl-L-methionine = [fructose-bisphosphate aldolase]-N(6),N(6),N(6)-trimethyl-L-lysine + 3 S-adenosyl-L-homocysteine + 3 H(+). Functionally, methylates 'Lys-14' of the large subunit of RuBisCO. Can also use with lower efficiency chloroplastic fructose-bisphosphate aldolases and gamma-tocopherol methyltransferase as substrates, but not a cytosolic aldolase. This Pisum sativum (Garden pea) protein is Ribulose-1,5 bisphosphate carboxylase/oxygenase large subunit N-methyltransferase, chloroplastic (RBCMT).